We begin with the raw amino-acid sequence, 249 residues long: Leucyl/phenylalanyl-tRNA--protein transferase (249 aa).

This sequence belongs to the L/F-transferase family.

The protein resides in the cytoplasm. It carries out the reaction N-terminal L-lysyl-[protein] + L-leucyl-tRNA(Leu) = N-terminal L-leucyl-L-lysyl-[protein] + tRNA(Leu) + H(+). The enzyme catalyses N-terminal L-arginyl-[protein] + L-leucyl-tRNA(Leu) = N-terminal L-leucyl-L-arginyl-[protein] + tRNA(Leu) + H(+). It catalyses the reaction L-phenylalanyl-tRNA(Phe) + an N-terminal L-alpha-aminoacyl-[protein] = an N-terminal L-phenylalanyl-L-alpha-aminoacyl-[protein] + tRNA(Phe). Functions in the N-end rule pathway of protein degradation where it conjugates Leu, Phe and, less efficiently, Met from aminoacyl-tRNAs to the N-termini of proteins containing an N-terminal arginine or lysine. This chain is Leucyl/phenylalanyl-tRNA--protein transferase, found in Xanthomonas axonopodis pv. citri (strain 306).